We begin with the raw amino-acid sequence, 160 residues long: Calsequestrin-2 (160 aa).

The protein belongs to the calsequestrin family. Monomer, homodimer and homooligomer. Mostly monomeric in the absence of calcium. Forms higher oligomers in a calcium-dependent manner. Dimers associate to form tetramers, that then form linear homomer chains. Interacts with ASPH and TRDN. Post-translationally, phosphorylation in the C-terminus, probably by CK2, moderately increases calcium buffering capacity. In terms of processing, N-glycosylated.

It is found in the sarcoplasmic reticulum lumen. In terms of biological role, calsequestrin is a high-capacity, moderate affinity, calcium-binding protein and thus acts as an internal calcium store in muscle. Calcium ions are bound by clusters of acidic residues at the protein surface, especially at the interface between subunits. Can bind around 60 Ca(2+) ions. Regulates the release of lumenal Ca(2+) via the calcium release channel RYR2; this plays an important role in triggering muscle contraction. Plays a role in excitation-contraction coupling in the heart and in regulating the rate of heart beats. In Sus scrofa (Pig), this protein is Calsequestrin-2 (CASQ2).